We begin with the raw amino-acid sequence, 407 residues long: Multifunctional CCA protein (407 aa).

ATP is bound by residues G8 and R11. Positions 8 and 11 each coordinate CTP. The Mg(2+) site is built by D21 and D23. Positions 91, 137, and 140 each coordinate ATP. CTP-binding residues include R91, R137, and R140. The HD domain occupies 226–327 (TGIHVMAVVD…VKLLERTDAL (102 aa)).

The protein belongs to the tRNA nucleotidyltransferase/poly(A) polymerase family. Bacterial CCA-adding enzyme type 1 subfamily. In terms of assembly, monomer. Can also form homodimers and oligomers. Mg(2+) is required as a cofactor. Ni(2+) serves as cofactor.

The enzyme catalyses a tRNA precursor + 2 CTP + ATP = a tRNA with a 3' CCA end + 3 diphosphate. It carries out the reaction a tRNA with a 3' CCA end + 2 CTP + ATP = a tRNA with a 3' CCACCA end + 3 diphosphate. Functionally, catalyzes the addition and repair of the essential 3'-terminal CCA sequence in tRNAs without using a nucleic acid template. Adds these three nucleotides in the order of C, C, and A to the tRNA nucleotide-73, using CTP and ATP as substrates and producing inorganic pyrophosphate. tRNA 3'-terminal CCA addition is required both for tRNA processing and repair. Also involved in tRNA surveillance by mediating tandem CCA addition to generate a CCACCA at the 3' terminus of unstable tRNAs. While stable tRNAs receive only 3'-terminal CCA, unstable tRNAs are marked with CCACCA and rapidly degraded. This is Multifunctional CCA protein from Aromatoleum aromaticum (strain DSM 19018 / LMG 30748 / EbN1) (Azoarcus sp. (strain EbN1)).